The sequence spans 300 residues: GTPase Era (300 aa).

Positions 4–172 constitute an Era-type G domain; sequence KSGFVALIGR…LEKIKKLLPE (169 aa). A G1 region spans residues 12 to 19; the sequence is GRPNVGKS. Residue 12 to 19 participates in GTP binding; the sequence is GRPNVGKS. The tract at residues 38–42 is G2; it reads QTTRN. The G3 stretch occupies residues 59-62; it reads DTPG. Residues 59 to 63 and 122 to 125 each bind GTP; these read DTPGV and NKAD. The interval 122–125 is G4; that stretch reads NKAD. Positions 151–153 are G5; sequence IAA. The 87-residue stretch at 195–281 folds into the KH type-2 domain; the sequence is IREKILLNLS…NLQLWVKVKK (87 aa).

Belongs to the TRAFAC class TrmE-Era-EngA-EngB-Septin-like GTPase superfamily. Era GTPase family. In terms of assembly, monomer.

Its subcellular location is the cytoplasm. It is found in the cell membrane. Functionally, an essential GTPase that binds both GDP and GTP, with rapid nucleotide exchange. Plays a role in 16S rRNA processing and 30S ribosomal subunit biogenesis and possibly also in cell cycle regulation and energy metabolism. The chain is GTPase Era from Caldicellulosiruptor saccharolyticus (strain ATCC 43494 / DSM 8903 / Tp8T 6331).